Consider the following 428-residue polypeptide: Chaperone SurA (428 aa).

Residues 1-20 (MKNWKTLLLGIAMIANTSFA) form the signal peptide. PpiC domains follow at residues 171–272 (STEL…KVND) and 282–382 (VTEV…ELLD).

The protein resides in the periplasm. The enzyme catalyses [protein]-peptidylproline (omega=180) = [protein]-peptidylproline (omega=0). Its function is as follows. Chaperone involved in the correct folding and assembly of outer membrane proteins. Recognizes specific patterns of aromatic residues and the orientation of their side chains, which are found more frequently in integral outer membrane proteins. May act in both early periplasmic and late outer membrane-associated steps of protein maturation. The sequence is that of Chaperone SurA from Escherichia coli O157:H7.